A 450-amino-acid polypeptide reads, in one-letter code: Putative zinc metalloprotease PA3649 (450 aa).

His-21 provides a ligand contact to Zn(2+). The active site involves Glu-22. His-25 provides a ligand contact to Zn(2+). A helical membrane pass occupies residues 97-119 (IAIVAAGPIANFLLAILFFWVVA). The PDZ domain maps to 199 to 291 (GWLKGEDNPD…VLDVALELAV (93 aa)). Residues 425–444 (AWGMQIGISLVVGVMLLALV) traverse the membrane as a helical segment.

The protein belongs to the peptidase M50B family. It depends on Zn(2+) as a cofactor.

The protein localises to the cell inner membrane. The sequence is that of Putative zinc metalloprotease PA3649 from Pseudomonas aeruginosa (strain ATCC 15692 / DSM 22644 / CIP 104116 / JCM 14847 / LMG 12228 / 1C / PRS 101 / PAO1).